Here is a 159-residue protein sequence, read N- to C-terminus: Endoribonuclease YbeY (159 aa).

Positions 125, 129, and 135 each coordinate Zn(2+).

It belongs to the endoribonuclease YbeY family. Zn(2+) is required as a cofactor.

It localises to the cytoplasm. In terms of biological role, single strand-specific metallo-endoribonuclease involved in late-stage 70S ribosome quality control and in maturation of the 3' terminus of the 16S rRNA. The sequence is that of Endoribonuclease YbeY from Thermoanaerobacter pseudethanolicus (strain ATCC 33223 / 39E) (Clostridium thermohydrosulfuricum).